Here is a 2561-residue protein sequence, read N- to C-terminus: Squalestatin hexaketide synthase (2561 aa).

The segment at 1-77 is disordered; that stretch reads MDVSKEEGQR…NGTTNITPEF (77 aa). Low complexity predominate over residues 20 to 74; it reads NETTNGHTNGYTNGHTNGHTNGTTNATTNGTTNGTMNGTTNGTTNRTTNGTTNIT. The region spanning 83-503 is the Ketosynthase family 3 (KS3) domain; that stretch reads QVPVAICGIG…GSNTHIIIDS (421 aa). Active-site for beta-ketoacyl synthase activity residues include cysteine 253, histidine 390, and histidine 427. The interval 603–925 is malonyl-CoA:ACP transacylase (MAT) domain; the sequence is FIFTGQGAQW…LEAIGKLFCF (323 aa). The segment at 972 to 1101 is N-terminal hotdog fold; it reads HELLGERSLE…GLVTASVVIS (130 aa). Positions 972–1253 are dehydratase (DH) domain; that stretch reads HELLGERSLE…RGFKCKRTDE (282 aa). Residues 972-1257 form the PKS/mFAS DH domain; sequence HELLGERSLE…CKRTDESFIQ (286 aa). Catalysis depends on histidine 1004, which acts as the Proton acceptor; for dehydratase activity. The C-terminal hotdog fold stretch occupies residues 1112–1257; the sequence is TFPRKVDTSR…CKRTDESFIQ (146 aa). Aspartate 1174 functions as the Proton donor; for dehydratase activity in the catalytic mechanism. Residues 1421–1599 are methyltransferase (CMet) domain; sequence SFFQAAGLNK…GFEGAGTVVL (179 aa). An enoyl reductase (ER) (ER) domain region spans residues 1826–2146; sequence GMLNTLHWVG…RGVHMGRIVV (321 aa). Residues 2170–2343 are ketoreductase (KR) domain; the sequence is STYLLTGGMG…PASVIDIAAI (174 aa). Residues 2472 to 2550 form the Carrier domain; that stretch reads VLFAQEIAKR…SLGRLATKRL (79 aa). Serine 2509 is subject to O-(pantetheine 4'-phosphoryl)serine.

It functions in the pathway secondary metabolite biosynthesis. Its function is as follows. Highly reducing polyketide synthase (HR-PKS); part of the gene cluster that mediates the biosynthesis of squalestatin S1 (SQS1, also known as zaragozic acid A), a heavily oxidized fungal polyketide that offers potent cholesterol lowering activity by targeting squalene synthase (SS). SQS1 is composed of a 2,8-dioxobicyclic[3.2.1]octane-3,4,5-tricarboxyclic acid core that is connected to two lipophilic polyketide arms. These initial steps feature the priming of an unusual benzoic acid starter unit onto the highly reducing polyketide synthase pks2, followed by oxaloacetate extension and product release to generate a tricarboxylic acid containing product. The phenylalanine ammonia lyase (PAL) M7 and the acyl-CoA ligase M9 are involved in transforming phenylalanine into benzoyl-CoA. The citrate synthase-like protein R3 is involved in connecting the C-alpha-carbons of the hexaketide chain and oxaloacetate to afford the tricarboxylic acid unit. The potential hydrolytic enzymes, M8 and M10, are in close proximity to pks2 and may participate in product release. On the other side, the tetraketide arm is synthesized by a the squalestatin tetraketide synthase pks1 and enzymatically esterified to the core in the last biosynthetic step, by the acetyltransferase M4. The biosynthesis of the tetraketide must involve 3 rounds of chain extension. After the first and second rounds methyl-transfer occurs, and in all rounds of extension the ketoreductase and dehydratase are active. The enoyl reductase and C-MeT of pks1 are not active in the final round of extension. The acetyltransferase M4 appears to have a broad substrate selectivity for its acyl CoA substrate, allowing the in vitro synthesis of novel squalestatins. The biosynthesis of SQS1 requires several oxidative steps likely performed by oxidoreductases M1, R1 and R2. Finally, in support of the identification of the cluster as being responsible for SQS1 production, the cluster contains a gene encoding a putative squalene synthase (SS) R6, suggesting a likely mechanism for self-resistance. This Phoma sp. (strain ATCC 20986 / MF5453) protein is Squalestatin hexaketide synthase.